A 157-amino-acid polypeptide reads, in one-letter code: Cytochrome c-type biogenesis protein CcmE (157 aa).

Topologically, residues 1–8 (MHPVRKQR) are cytoplasmic. The chain crosses the membrane as a helical; Signal-anchor for type II membrane protein span at residues 9-29 (LMTVLFIVIASSVAVGLMVFA). The Periplasmic segment spans residues 30-157 (LSKNLNLFYP…KTCEGLDYAS (128 aa)). Heme is bound by residues histidine 124 and tyrosine 128.

This sequence belongs to the CcmE/CycJ family.

It localises to the cell inner membrane. Heme chaperone required for the biogenesis of c-type cytochromes. Transiently binds heme delivered by CcmC and transfers the heme to apo-cytochromes in a process facilitated by CcmF and CcmH. The protein is Cytochrome c-type biogenesis protein CcmE of Saccharophagus degradans (strain 2-40 / ATCC 43961 / DSM 17024).